A 1407-amino-acid polypeptide reads, in one-letter code: DNA-directed RNA polymerase subunit beta' (1407 aa).

Zn(2+)-binding residues include Cys70, Cys72, Cys85, and Cys88. Mg(2+) is bound by residues Asp460, Asp462, and Asp464. Zn(2+)-binding residues include Cys814, Cys888, Cys895, and Cys898. At Lys972 the chain carries N6-acetyllysine.

Belongs to the RNA polymerase beta' chain family. In terms of assembly, the RNAP catalytic core consists of 2 alpha, 1 beta, 1 beta' and 1 omega subunit. When a sigma factor is associated with the core the holoenzyme is formed, which can initiate transcription. Mg(2+) serves as cofactor. It depends on Zn(2+) as a cofactor.

The catalysed reaction is RNA(n) + a ribonucleoside 5'-triphosphate = RNA(n+1) + diphosphate. Functionally, DNA-dependent RNA polymerase catalyzes the transcription of DNA into RNA using the four ribonucleoside triphosphates as substrates. This Shigella flexneri serotype 5b (strain 8401) protein is DNA-directed RNA polymerase subunit beta'.